The sequence spans 271 residues: Pyrroline-5-carboxylate reductase (271 aa).

The protein belongs to the pyrroline-5-carboxylate reductase family.

Its subcellular location is the cytoplasm. The catalysed reaction is L-proline + NADP(+) = (S)-1-pyrroline-5-carboxylate + NADPH + 2 H(+). It carries out the reaction L-proline + NAD(+) = (S)-1-pyrroline-5-carboxylate + NADH + 2 H(+). It functions in the pathway amino-acid biosynthesis; L-proline biosynthesis; L-proline from L-glutamate 5-semialdehyde: step 1/1. Its function is as follows. Catalyzes the reduction of 1-pyrroline-5-carboxylate (PCA) to L-proline. The chain is Pyrroline-5-carboxylate reductase from Haemophilus influenzae (strain ATCC 51907 / DSM 11121 / KW20 / Rd).